The following is a 54-amino-acid chain: uncharacterized protein (54 aa).

This is an uncharacterized protein from Bacillus subtilis (strain 168).